The primary structure comprises 1032 residues: Probable ATP-dependent RNA helicase DDX46 (1032 aa).

A compositionally biased stretch (basic residues) spans 1-24 (MGRESRHYRKRSASRGRSGSRSRS). Positions 1–227 (MGRESRHYRK…NEMEDEELDP (227 aa)) are disordered. Gly-2 is lipidated: N-myristoyl glycine. The segment covering 26–49 (SPSDKRSKRGDDRRSRSRDRDRRR) has biased composition (basic and acidic residues). 2 stretches are compositionally biased toward basic residues: residues 50–73 (ERSR…RSRS) and 81–103 (ERRR…RRSR). Residues 112 to 200 (KKAENRSRSK…EMKQGKKWSL (89 aa)) show a composition bias toward basic and acidic residues. Residues 152-197 (DQNKLEEEMRKRKERVEKWREEQRKKAMENIGELKKEIEEMKQGKK) are a coiled coil. Lys-186 participates in a covalent cross-link: Glycyl lysine isopeptide (Lys-Gly) (interchain with G-Cter in SUMO2). Ser-199 is subject to Phosphoserine. Positions 201–211 (EDDDDDEDDPA) are enriched in acidic residues. Position 263 is an N6-acetyllysine (Lys-263). Tyr-294 is modified (phosphotyrosine). Ser-295 and Ser-296 each carry phosphoserine. Lys-325 participates in a covalent cross-link: Glycyl lysine isopeptide (Lys-Gly) (interchain with G-Cter in SUMO2). Ser-346 is subject to Phosphoserine. Residues 372–400 (KSWVQCGISMKILNSLKKHGYEKPTPIQT) carry the Q motif motif. The Helicase ATP-binding domain occupies 403-581 (IPAIMSGRDL…RRILSKPIEV (179 aa)). Residues 529–532 (DEAD) carry the DEAD box motif. In terms of domain architecture, Helicase C-terminal spans 592-753 (DVEQQVIVIE…AVPPDLEKLW (162 aa)). The residue at position 776 (Lys-776) is an N6-acetyllysine. Lys-779 is covalently cross-linked (Glycyl lysine isopeptide (Lys-Gly) (interchain with G-Cter in SUMO2)). Ser-804 is modified (phosphoserine). At Lys-904 the chain carries N6-acetyllysine. Residues Lys-908 and Lys-916 each participate in a glycyl lysine isopeptide (Lys-Gly) (interchain with G-Cter in SUMO2) cross-link. Ser-929 is modified (phosphoserine).

It belongs to the DEAD box helicase family. DDX46/PRP5 subfamily. In terms of assembly, component of the 17S U2 SnRNP complex, a ribonucleoprotein complex that contains small nuclear RNA (snRNA) U2 and a number of specific proteins. Within the 17S U2 SnRNP complex, DDX46 is part of the SF3B subcomplex, which is required for 'A' complex assembly formed by the stable binding of U2 snRNP to the branchpoint sequence in pre-mRNA. Recruited to the 17S U2 SnRNP complex following release of DDX42; DDX42 and DDX46 bind the SF3B subcomplex in a competitive manner.

Its subcellular location is the nucleus speckle. It is found in the nucleus. The protein resides in the cajal body. The catalysed reaction is ATP + H2O = ADP + phosphate + H(+). Functionally, component of the 17S U2 SnRNP complex of the spliceosome, a large ribonucleoprotein complex that removes introns from transcribed pre-mRNAs. The 17S U2 SnRNP complex (1) directly participates in early spliceosome assembly and (2) mediates recognition of the intron branch site during pre-mRNA splicing by promoting the selection of the pre-mRNA branch-site adenosine, the nucleophile for the first step of splicing. Within the 17S U2 SnRNP complex, DDX46 plays essential roles during assembly of pre-spliceosome and proofreading of the branch site. The polypeptide is Probable ATP-dependent RNA helicase DDX46 (Ddx46) (Rattus norvegicus (Rat)).